We begin with the raw amino-acid sequence, 508 residues long: MDSRLHRLINLEVTPGKDVRKTAIIGTIGPKTNNVDTLVALRKAGLNIVRMNFSHGSYEYHQSVIDNARKSEQVYPGRPLAIALDTKGPEIRTGTNVDDVDYPIPPNHEMIFTTDDKYAKACDDKIMYVDYKNITKVIQPGKVIYVDDGVLSFEVLEVVDDKTLKVKSLNAGKISSHKGVNLPGTDVDLPALSEKDKEDLRFGVKNGVHMIFASFIRTAQDVLTIREVLGEEGKDIKVIVKIENQQGVNNFDEILEVAHGVMVARGDLGIEIPAPQVLAVQKKLIAKCNLAGKPVICATQMLESMTFNPRPTRAEVSDVGNAILDGADCVMLSGETAKGNYPINAVTTMAETAIIAERAIAYMPLYDDLRNCTPKPTSTTETVAASAVAAVQEQGAKLILVLSTSGNTARLVSKYRPQCPIVLVTRNPRTARFSHLFRGVFPFVYEKEPLDDWSEDTHARLRFGVDMAKEYGFVKNGDAVISIQGFKGGVGHSNTMRVSIVGGEKEDI.

A substrate-binding site is contributed by Arg-50. Residues Asn-52, Ser-54, Asp-85, and Thr-86 each contribute to the K(+) site. 52-55 contacts ATP; sequence NFSH. ATP contacts are provided by Arg-92 and Lys-178. Mg(2+) is bound at residue Glu-243. Positions 266, 267, and 299 each coordinate substrate. Asp-267 serves as a coordination point for Mg(2+).

This sequence belongs to the pyruvate kinase family. Homotetramer. It depends on Mg(2+) as a cofactor. Requires K(+) as cofactor.

The enzyme catalyses pyruvate + ATP = phosphoenolpyruvate + ADP + H(+). Its pathway is carbohydrate degradation; glycolysis; pyruvate from D-glyceraldehyde 3-phosphate: step 5/5. The sequence is that of Pyruvate kinase 2 (PYK2) from Candida glabrata (strain ATCC 2001 / BCRC 20586 / JCM 3761 / NBRC 0622 / NRRL Y-65 / CBS 138) (Yeast).